The primary structure comprises 257 residues: DNA repair protein RecO (257 aa).

The protein belongs to the RecO family.

In terms of biological role, involved in DNA repair and RecF pathway recombination. The protein is DNA repair protein RecO of Variovorax paradoxus (strain S110).